The following is a 306-amino-acid chain: Pantothenate kinase (306 aa).

Position 90-97 (90-97 (GSVAVGKS)) interacts with ATP.

Belongs to the prokaryotic pantothenate kinase family.

The protein localises to the cytoplasm. The enzyme catalyses (R)-pantothenate + ATP = (R)-4'-phosphopantothenate + ADP + H(+). The protein operates within cofactor biosynthesis; coenzyme A biosynthesis; CoA from (R)-pantothenate: step 1/5. This Ligilactobacillus salivarius (strain UCC118) (Lactobacillus salivarius) protein is Pantothenate kinase.